Consider the following 379-residue polypeptide: Dual-specificity RNA methyltransferase RlmN (379 aa).

The Proton acceptor role is filled by E95. The Radical SAM core domain maps to 101-345 (EETRGTLCVS…TTVRKTRGDD (245 aa)). C108 and C350 are disulfide-bonded. Positions 115, 119, and 122 each coordinate [4Fe-4S] cluster. S-adenosyl-L-methionine contacts are provided by residues 176 to 177 (GE), S208, 230 to 232 (SLH), and N307. Residue C350 is the S-methylcysteine intermediate of the active site.

The protein belongs to the radical SAM superfamily. RlmN family. [4Fe-4S] cluster is required as a cofactor.

Its subcellular location is the cytoplasm. It carries out the reaction adenosine(2503) in 23S rRNA + 2 reduced [2Fe-2S]-[ferredoxin] + 2 S-adenosyl-L-methionine = 2-methyladenosine(2503) in 23S rRNA + 5'-deoxyadenosine + L-methionine + 2 oxidized [2Fe-2S]-[ferredoxin] + S-adenosyl-L-homocysteine. The catalysed reaction is adenosine(37) in tRNA + 2 reduced [2Fe-2S]-[ferredoxin] + 2 S-adenosyl-L-methionine = 2-methyladenosine(37) in tRNA + 5'-deoxyadenosine + L-methionine + 2 oxidized [2Fe-2S]-[ferredoxin] + S-adenosyl-L-homocysteine. Its function is as follows. Specifically methylates position 2 of adenine 2503 in 23S rRNA and position 2 of adenine 37 in tRNAs. m2A2503 modification seems to play a crucial role in the proofreading step occurring at the peptidyl transferase center and thus would serve to optimize ribosomal fidelity. The sequence is that of Dual-specificity RNA methyltransferase RlmN from Burkholderia cenocepacia (strain HI2424).